Here is a 247-residue protein sequence, read N- to C-terminus: uncharacterized protein (247 aa).

2 helical membrane passes run 9-29 (IIAI…FLIF) and 37-57 (SYFL…SLII).

It localises to the cell membrane. This is an uncharacterized protein from Methanocaldococcus jannaschii (strain ATCC 43067 / DSM 2661 / JAL-1 / JCM 10045 / NBRC 100440) (Methanococcus jannaschii).